The primary structure comprises 2615 residues: Polycystin-1-like protein 1 (2615 aa).

Residues 1-1524 (MDVDEDQHAV…VSSISEFQSH (1524 aa)) lie on the Extracellular side of the membrane. Positions 17–93 (IQANPELCVS…GTNSFSNPPP (77 aa)) are disordered. N-linked (GlcNAc...) asparagine glycosylation is found at Asn224, Asn297, Asn306, Asn390, Asn440, Asn534, and Asn619. PKD domains are found at residues 291 to 373 (SVSV…VQKR) and 375 to 456 (MANR…VREP). Positions 457–1349 (CQPPPVKNMG…GEEDYLHKRN (893 aa)) constitute an REJ domain. The disordered stretch occupies residues 749–815 (SSKSDLPSNL…GEPMEEYSSL (67 aa)). The segment covering 778–789 (ALSNLGSISAES) has biased composition (polar residues). A GAIN-B domain is found at 1364–1512 (RFTGLSENSQ…SVLRRKLNAT (149 aa)). Asn1458 is a glycosylation site (N-linked (GlcNAc...) asparagine). A disulfide bond links Cys1468 and Cys1494. Positions 1468–1512 (CVFWDKTEWRSEGPYPQPGSSPEKVNCSYHHLAPVSVLRRKLNAT) are GPS. Asn1510 is a glycosylation site (N-linked (GlcNAc...) asparagine). Residues 1525–1545 (PHNLLPGIFSAFLLVLYGILV) form a helical membrane-spanning segment. Residues 1546 to 1732 (SKSRYVDCHE…PPSRSYLHTQ (187 aa)) are Cytoplasmic-facing. In terms of domain architecture, PLAT spans 1573 to 1690 (QLYAVVIDTG…LGGHVLREFF (118 aa)). The helical transmembrane segment at 1733–1753 (RLAVSFCLLCVYSCLTALVTV) threads the bilayer. Residues 1754 to 1772 (RDHQQRPLDVGPTAITLEP) lie on the Extracellular side of the membrane. Residues 1773–1793 (FCMALLCTLLACPVAQLLSLL) traverse the membrane as a helical segment. At 1794–1905 (FRCSKEARGD…ELGSQKSRVC (112 aa)) the chain is on the cytoplasmic side. The disordered stretch occupies residues 1807-1840 (STQWPLRGVKTETPQGHDSSGRPDSRQPSPHPTS). A helical membrane pass occupies residues 1906–1926 (LLWSSSVAWAISGSASLACGL). Residues 1927-1950 (GTGFLGYWFVPAQCMWWLYLLLLS) lie on the Extracellular side of the membrane. The helical transmembrane segment at 1951–1971 (LVCCAFITQPLMICLAALVFA) threads the bilayer. The Cytoplasmic segment spans residues 1972-2057 (WKRKHDSKFF…ERLRRESIMQ (86 aa)). A helical transmembrane segment spans residues 2058-2078 (AALRDMTTHSIMLLLLLFIAY). Over 2079 to 2288 (GRFCPGEISL…IFYSDSALKY (210 aa)) the chain is Extracellular. A helical membrane pass occupies residues 2289-2309 (LLMLSELLFLVLNVIHLCFQL). Topologically, residues 2310–2332 (WGMTTKGILSYWRKPRHWLELSM) are cytoplasmic. A helical transmembrane segment spans residues 2333-2353 (VGVAIAYYAASGHLTTLAVNI). Residues 2354–2379 (TDQFHKGLYQRLVDIGLMVSWHQRAR) lie on the Extracellular side of the membrane. Residues 2380–2400 (CLQGILLFLWMLKYVHLLSSL) traverse the membrane as a helical segment. Residues 2401–2405 (STMTP) are Cytoplasmic-facing. A helical transmembrane segment spans residues 2406 to 2426 (FSAVTCFPLFRVLLVGALLLA). The Extracellular segment spans residues 2427 to 2483 (AHYHSRWFLLFTGTLSHGTSAEAFPGLLLQFPGRSKKDSWHNCLKSDHGVMRCYYGT). Residues 2484–2504 (LFLLLATLGFRMLRATFLTVF) form a helical membrane-spanning segment. Topologically, residues 2505 to 2615 (QNRKSSHRKP…VSGPLAAESE (111 aa)) are cytoplasmic. Residues 2589-2615 (RAGDSPPVGSSEYQATGVSGPLAAESE) form a disordered region.

Belongs to the polycystin family. Heterodimer. Interacts with PKD2 to form a calcium channel. Interacts with PKD2L1; to form ciliary calcium channel. May interact with GNA12, GNAS, GNAI1 and GNAI2. As to expression, in testis, strong expression in Leydig cells, low level in seminal ducts, myoid cells and tunica vaginalis. Other tissues, including adrenal gland and heart myocardium, also show low expression. In embryo, highly expressed in the node.

It localises to the cell projection. Its subcellular location is the cilium membrane. Component of a calcium-permeant ion channel formed by PKD1L2 and PKD1L1 in primary cilia, where it controls cilium calcium concentration, without affecting cytoplasmic calcium concentration, and regulates sonic hedgehog/SHH signaling and GLI2 transcription. The PKD1L1:PKD2L1 channel complex is mechanosensitive only at high pressures and is highly temperature sensitive. Also involved in left/right axis specification downstream of nodal flow by forming a complex with PKD2 in cilia to facilitate flow detection in left/right patterning. May function as a G-protein-coupled receptor. This is Polycystin-1-like protein 1 from Mus musculus (Mouse).